The chain runs to 65 residues: UPF0434 protein CPS_2127 (65 aa).

This sequence belongs to the UPF0434 family.

The protein is UPF0434 protein CPS_2127 of Colwellia psychrerythraea (strain 34H / ATCC BAA-681) (Vibrio psychroerythus).